The sequence spans 609 residues: UvrABC system protein C (609 aa).

A GIY-YIG domain is found at 22 to 100; it reads EKPGVYQYLN…IKKYKPRYNV (79 aa). The region spanning 214–249 is the UVR domain; that stretch reads QDISRMLVEKMQELANEMKFEEAQKIKEKYLLIENY.

The protein belongs to the UvrC family. Interacts with UvrB in an incision complex.

It is found in the cytoplasm. The UvrABC repair system catalyzes the recognition and processing of DNA lesions. UvrC both incises the 5' and 3' sides of the lesion. The N-terminal half is responsible for the 3' incision and the C-terminal half is responsible for the 5' incision. This chain is UvrABC system protein C, found in Bacteroides thetaiotaomicron (strain ATCC 29148 / DSM 2079 / JCM 5827 / CCUG 10774 / NCTC 10582 / VPI-5482 / E50).